The sequence spans 624 residues: DNA mismatch repair protein MutL (624 aa).

A compositionally biased stretch (basic and acidic residues) spans 340-355 (NKLDTDSHSQSHERGH). Positions 340–415 (NKLDTDSHSQ…RGGATSSYRQ (76 aa)) are disordered. Polar residues-rich tracts occupy residues 372–383 (HQTAPSTKASTE) and 391–415 (SPIS…SYRQ).

It belongs to the DNA mismatch repair MutL/HexB family.

Functionally, this protein is involved in the repair of mismatches in DNA. It is required for dam-dependent methyl-directed DNA mismatch repair. May act as a 'molecular matchmaker', a protein that promotes the formation of a stable complex between two or more DNA-binding proteins in an ATP-dependent manner without itself being part of a final effector complex. This is DNA mismatch repair protein MutL from Shewanella sediminis (strain HAW-EB3).